Consider the following 44-residue polypeptide: MSDKPDMAEIEKFDKSKLKKTETQEKNPLPSKETIEQEKQAGES.

Residues 1–25 (MSDKPDMAEIEKFDKSKLKKTETQE) are compositionally biased toward basic and acidic residues. Residues 1–44 (MSDKPDMAEIEKFDKSKLKKTETQEKNPLPSKETIEQEKQAGES) are disordered. An N-acetylserine modification is found at Ser2. The residue at position 2 (Ser2) is a Phosphoserine. Lys4 bears the N6-acetyllysine mark. Lys12 carries the N6-acetyllysine; alternate modification. Lys12 is covalently cross-linked (Glycyl lysine isopeptide (Lys-Gly) (interchain with G-Cter in SUMO2); alternate). A Phosphothreonine modification is found at Thr23. Lys26 carries the N6-acetyllysine modification. Phosphoserine is present on Ser31. Residue Lys32 is modified to N6-acetyllysine. Over residues 33–44 (ETIEQEKQAGES) the composition is skewed to basic and acidic residues. Position 34 is a phosphothreonine (Thr34). Residue Lys39 is modified to N6-acetyllysine.

The protein belongs to the thymosin beta family. In terms of assembly, identified in a complex composed of ACTA1, COBL, GSN AND TMSB4X. Interacts with SERPINB1. In terms of processing, acSDKP is inactivated by ACE, which removes the dipeptide Lys-Pro from its C-terminus.

The protein localises to the cytoplasm. It is found in the cytoskeleton. Plays an important role in the organization of the cytoskeleton. Binds to and sequesters actin monomers (G actin) and therefore inhibits actin polymerization. In terms of biological role, potent inhibitor of bone marrow derived stem cell differentiation. Acts by inhibits the entry of hematopoietic pluripotent stem cells into the S-phase. The sequence is that of Thymosin beta-4 (TMSB4) from Bos taurus (Bovine).